Reading from the N-terminus, the 352-residue chain is MEVPELGPGLVERLEQLATCPLCGGPFEDPVLLACEHSFCRSCLARCWGSPAAPGSEEATPSCPCCGQPCPRRSLRSNVRLAVEVRISRGLREKLAEPGARTGRRRGGRIPTMGCLDPQGEDMRKTWRRFDVPVPKSSNSEEDLPEDYPVVKNMLHRLTADLTLDPRTAHRDLLISSDYRGVSLAPPGTPVPLDSPERFDRLRAVLGAQGFASGRHCWEVETAEGACFRDSLAKDEDAGESCYAVGAAGESVTRKGLIKLCPSEAIWAVEGRGGRLWALTAPEPTLLGGARPPPQRIRVDLDWERGRVAFYDGRSLDLLFAFQAPGPLGERVFPLLCTCDPRAPLRIVPGEA.

An RING-type zinc finger spans residues 20–67; it reads CPLCGGPFEDPVLLACEHSFCRSCLARCWGSPAAPGSEEATPSCPCCG. A disordered region spans residues 98–118; it reads PGARTGRRRGGRIPTMGCLDP. A B30.2/SPRY domain is found at 142-352; that stretch reads EDLPEDYPVV…APLRIVPGEA (211 aa).

Expressed in the hippocampus. Expression is rapidly up-regulated in granule cells of the dentate gyrus after LTP induction.

It localises to the cytoplasm. The catalysed reaction is S-ubiquitinyl-[E2 ubiquitin-conjugating enzyme]-L-cysteine + [acceptor protein]-L-lysine = [E2 ubiquitin-conjugating enzyme]-L-cysteine + N(6)-ubiquitinyl-[acceptor protein]-L-lysine.. Its pathway is protein modification; protein ubiquitination. Plays an inhibitory role in anti-RNA viral innate immunity by targeting the adapter DDX3X and promoting its 'Lys-48'-linked polyubiquitination. Alternatively, enhances the cGAS-STING pathway activation by promoting 'Lys-63'-linked ubiquitination of STING1, facilitating the STING1-TBK1 complex formation and STING1 activation. This Rattus norvegicus (Rat) protein is RING finger protein 39 (Rnf39).